A 280-amino-acid polypeptide reads, in one-letter code: Small ribosomal subunit protein uS3 (280 aa).

Residues 38 to 106 (IRRLLSTGLE…QVQLNILEVR (69 aa)) form the KH type-2 domain. The interval 215–280 (AAAAPAGAER…PAAEPQSTES (66 aa)) is disordered. A compositionally biased stretch (low complexity) spans 238-280 (SGASGTTATGTEAGRAAASADESTAAGQPAEAAPAAEPQSTES).

This sequence belongs to the universal ribosomal protein uS3 family. In terms of assembly, part of the 30S ribosomal subunit. Forms a tight complex with proteins S10 and S14.

In terms of biological role, binds the lower part of the 30S subunit head. Binds mRNA in the 70S ribosome, positioning it for translation. The chain is Small ribosomal subunit protein uS3 from Mycolicibacterium paratuberculosis (strain ATCC BAA-968 / K-10) (Mycobacterium paratuberculosis).